A 103-amino-acid chain; its full sequence is Large ribosomal subunit protein bL21 (103 aa).

It belongs to the bacterial ribosomal protein bL21 family. In terms of assembly, part of the 50S ribosomal subunit. Contacts protein L20.

Its function is as follows. This protein binds to 23S rRNA in the presence of protein L20. The polypeptide is Large ribosomal subunit protein bL21 (Shewanella loihica (strain ATCC BAA-1088 / PV-4)).